Consider the following 139-residue polypeptide: Endoribonuclease YbeY (139 aa).

Residues histidine 99, histidine 103, and histidine 109 each coordinate Zn(2+).

Belongs to the endoribonuclease YbeY family. It depends on Zn(2+) as a cofactor.

The protein resides in the cytoplasm. Functionally, single strand-specific metallo-endoribonuclease involved in late-stage 70S ribosome quality control and in maturation of the 3' terminus of the 16S rRNA. This chain is Endoribonuclease YbeY, found in Sulfurimonas denitrificans (strain ATCC 33889 / DSM 1251) (Thiomicrospira denitrificans (strain ATCC 33889 / DSM 1251)).